A 422-amino-acid chain; its full sequence is Tyrosine--tRNA ligase 1 (422 aa).

Tyr-35 serves as a coordination point for L-tyrosine. Residues 40–49 (PTADSLHIGH) carry the 'HIGH' region motif. L-tyrosine-binding residues include Tyr-170 and Gln-174. Residues 232–236 (KFGKT) carry the 'KMSKS' region motif. Lys-235 contributes to the ATP binding site. The 67-residue stretch at 355–421 (LSLVDVLVQS…GKKKYFLVTY (67 aa)) folds into the S4 RNA-binding domain.

This sequence belongs to the class-I aminoacyl-tRNA synthetase family. TyrS type 1 subfamily. In terms of assembly, homodimer.

The protein resides in the cytoplasm. It carries out the reaction tRNA(Tyr) + L-tyrosine + ATP = L-tyrosyl-tRNA(Tyr) + AMP + diphosphate + H(+). In terms of biological role, catalyzes the attachment of tyrosine to tRNA(Tyr) in a two-step reaction: tyrosine is first activated by ATP to form Tyr-AMP and then transferred to the acceptor end of tRNA(Tyr). The polypeptide is Tyrosine--tRNA ligase 1 (Bacillus subtilis (strain 168)).